Here is a 107-residue protein sequence, read N- to C-terminus: DNA-directed RNA polymerase subunit omega (107 aa).

Positions 81-107 (MEEEAAKGNADAGQGEGDAPKTPGQDG) are disordered.

Belongs to the RNA polymerase subunit omega family. The RNAP catalytic core consists of 2 alpha, 1 beta, 1 beta' and 1 omega subunit. When a sigma factor is associated with the core the holoenzyme is formed, which can initiate transcription.

It carries out the reaction RNA(n) + a ribonucleoside 5'-triphosphate = RNA(n+1) + diphosphate. Promotes RNA polymerase assembly. Latches the N- and C-terminal regions of the beta' subunit thereby facilitating its interaction with the beta and alpha subunits. In Alkalilimnicola ehrlichii (strain ATCC BAA-1101 / DSM 17681 / MLHE-1), this protein is DNA-directed RNA polymerase subunit omega.